Here is a 155-residue protein sequence, read N- to C-terminus: MSFTNLLEKYDFKLASASEEYKQRRKYQMALFMASGAATIFAARFAFKSTMARQYVPTLFQGNHQPPTSYNFTTDAAVAVGTGTVLCGSVSSMIIFGTCWMMDVSTFKEFGWRMKTVMGGYEKQKQLAQMPLDEESEIIQNGLNDILEGKYDDIE.

Transmembrane regions (helical) follow at residues 30–47 and 76–98; these read ALFM…RFAF and AAVA…IFGT.

The protein belongs to the AIM11 family.

It is found in the membrane. The chain is Altered inheritance of mitochondria protein 11 (AIM11) from Meyerozyma guilliermondii (strain ATCC 6260 / CBS 566 / DSM 6381 / JCM 1539 / NBRC 10279 / NRRL Y-324) (Yeast).